Reading from the N-terminus, the 716-residue chain is Forkhead box protein P2 (716 aa).

Residues 1 to 28 (MMQESATETISNSSMNQNGMSTLSSQLD) show a composition bias toward polar residues. 2 disordered regions span residues 1 to 45 (MMQE…SEVS) and 286 to 340 (KHGG…TGAS). The segment covering 293-306 (TTNNSSSTTSSTTS) has biased composition (low complexity). Polar residues predominate over residues 316 to 325 (SIVNGQSSVL). The span at 327 to 338 (ARRDSSSHEETG) shows a compositional bias: basic and acidic residues. A C2H2-type zinc finger spans residues 347–372 (GVCKWPGCESICEDFGQFLKHLNNEH). A leucine-zipper region spans residues 389–410 (VQQLEIQLSKERERLQAMMTHL). The segment at 423–427 (PLNLV) is CTBP1-binding. Positions 439–460 (TSPQSLPQTPTTPTAPVTPITQ) are enriched in low complexity. Residues 439–466 (TSPQSLPQTPTTPTAPVTPITQGPSVIT) form a disordered region. The fork-head DNA-binding region spans 505-595 (RPPFTYATLI…SQKITGSPTL (91 aa)). Disordered stretches follow at residues 650–669 (LDHI…QPHI) and 679–716 (VIAE…EDLE). A compositionally biased stretch (acidic residues) spans 700 to 716 (LEDDREIEEEPLSEDLE).

In terms of assembly, forms homodimers and heterodimers with FOXP1 and FOXP4. Dimerization is required for DNA-binding. Interacts with CTBP1. Interacts with FOXP1. Interacts with TBR1. Interacts with ZMYM2.

The protein localises to the nucleus. In terms of biological role, transcriptional repressor that may play a role in the specification and differentiation of lung epithelium. May also play a role in developing neural, gastrointestinal and cardiovascular tissues. Can act with CTBP1 to synergistically repress transcription but CTPBP1 is not essential. Plays a role in synapse formation by regulating SRPX2 levels. The protein is Forkhead box protein P2 (FOXP2) of Pan paniscus (Pygmy chimpanzee).